A 177-amino-acid polypeptide reads, in one-letter code: Translation initiation factor IF-3 (177 aa).

Belongs to the IF-3 family. Monomer.

It is found in the cytoplasm. IF-3 binds to the 30S ribosomal subunit and shifts the equilibrium between 70S ribosomes and their 50S and 30S subunits in favor of the free subunits, thus enhancing the availability of 30S subunits on which protein synthesis initiation begins. This Rhizobium meliloti (strain 1021) (Ensifer meliloti) protein is Translation initiation factor IF-3.